The primary structure comprises 159 residues: 2-C-methyl-D-erythritol 2,4-cyclodiphosphate synthase (159 aa).

A divalent metal cation is bound by residues aspartate 9 and histidine 11. 4-CDP-2-C-methyl-D-erythritol 2-phosphate contacts are provided by residues 9–11 and 35–36; these read DVH and HS. Histidine 43 serves as a coordination point for a divalent metal cation. Residues 57-59, 62-66, 133-136, phenylalanine 140, and arginine 143 contribute to the 4-CDP-2-C-methyl-D-erythritol 2-phosphate site; these read DLG, FPDTD, and TTTE.

The protein belongs to the IspF family. As to quaternary structure, homotrimer. The cofactor is a divalent metal cation.

The enzyme catalyses 4-CDP-2-C-methyl-D-erythritol 2-phosphate = 2-C-methyl-D-erythritol 2,4-cyclic diphosphate + CMP. It participates in isoprenoid biosynthesis; isopentenyl diphosphate biosynthesis via DXP pathway; isopentenyl diphosphate from 1-deoxy-D-xylulose 5-phosphate: step 4/6. Functionally, involved in the biosynthesis of isopentenyl diphosphate (IPP) and dimethylallyl diphosphate (DMAPP), two major building blocks of isoprenoid compounds. Catalyzes the conversion of 4-diphosphocytidyl-2-C-methyl-D-erythritol 2-phosphate (CDP-ME2P) to 2-C-methyl-D-erythritol 2,4-cyclodiphosphate (ME-CPP) with a corresponding release of cytidine 5-monophosphate (CMP). The protein is 2-C-methyl-D-erythritol 2,4-cyclodiphosphate synthase of Shouchella clausii (strain KSM-K16) (Alkalihalobacillus clausii).